The primary structure comprises 160 residues: Secreted RxLR effector protein 83 (160 aa).

A signal peptide spans 1-21 (MLVLLAATFFIYISRLTSTDA). Positions 27-30 (RGLR) match the RxLR motif. N39 and N131 each carry an N-linked (GlcNAc...) asparagine glycan.

This sequence belongs to the RxLR effector family.

Its subcellular location is the secreted. The protein localises to the host nucleus. It localises to the host cytoplasm. Functionally, secreted effector that completely suppresses the host cell death induced by cell death-inducing proteins. This is Secreted RxLR effector protein 83 from Plasmopara viticola (Downy mildew of grapevine).